Consider the following 481-residue polypeptide: Glycogen synthase (481 aa).

Lys15 is a binding site for ADP-alpha-D-glucose.

Belongs to the glycosyltransferase 1 family. Bacterial/plant glycogen synthase subfamily.

It catalyses the reaction [(1-&gt;4)-alpha-D-glucosyl](n) + ADP-alpha-D-glucose = [(1-&gt;4)-alpha-D-glucosyl](n+1) + ADP + H(+). It functions in the pathway glycan biosynthesis; glycogen biosynthesis. Its function is as follows. Synthesizes alpha-1,4-glucan chains using ADP-glucose. The polypeptide is Glycogen synthase (Thermosipho melanesiensis (strain DSM 12029 / CIP 104789 / BI429)).